Reading from the N-terminus, the 149-residue chain is uncharacterized protein (149 aa).

One can recognise a HotDog ACOT-type domain in the interval 16–128; the sequence is PAGEPAIRVI…LFTFVAIDED (113 aa).

Belongs to the acyl coenzyme A hydrolase family.

This is an uncharacterized protein from Zymomonas mobilis subsp. mobilis (strain ATCC 31821 / ZM4 / CP4).